The chain runs to 508 residues: UTP--glucose-1-phosphate uridylyltransferase (508 aa).

Blocked amino end (Ser) is present on Ser2. Ser13 is modified (phosphoserine). UTP is bound by residues 113–116 (LNGG), Lys127, Gln190, and Gly222. 115-116 (GG) lines the substrate pocket. Lys127 contributes to the Mg(2+) binding site. Substrate contacts are provided by residues His223 and 251-253 (NID). UTP is bound by residues Asp253 and Lys396. Asp253 provides a ligand contact to Mg(2+). The active site involves Lys396. A Phosphothreonine modification is found at Thr426. Ser434 is modified (phosphoserine). Residue Lys438 is modified to N6-acetyllysine. 2 positions are modified to phosphoserine: Ser448 and Ser461. The oligomerization stretch occupies residues 457–508 (HLTVSGDVTFGKNVSLKGTVIIIANHGDRIDIPPGAVLENKIVSGNLRILDH). The critical for end-to-end subunit interaction stretch occupies residues 502 to 503 (NL).

It belongs to the UDPGP type 1 family. In terms of assembly, homooctamer.

The protein resides in the cytoplasm. It catalyses the reaction alpha-D-glucose 1-phosphate + UTP + H(+) = UDP-alpha-D-glucose + diphosphate. Its pathway is glycan biosynthesis; glycogen biosynthesis. Functionally, UTP--glucose-1-phosphate uridylyltransferase catalyzing the conversion of glucose-1-phosphate into UDP-glucose, a crucial precursor for the production of glycogen. The chain is UTP--glucose-1-phosphate uridylyltransferase (UGP2) from Bos taurus (Bovine).